The following is a 171-amino-acid chain: Small ribosomal subunit protein uS5 (171 aa).

The S5 DRBM domain occupies 14–77 (YIEKLVNIRR…DKARKAMKNV (64 aa)).

The protein belongs to the universal ribosomal protein uS5 family. Part of the 30S ribosomal subunit. Contacts proteins S4 and S8.

With S4 and S12 plays an important role in translational accuracy. Its function is as follows. Located at the back of the 30S subunit body where it stabilizes the conformation of the head with respect to the body. In Vesicomyosocius okutanii subsp. Calyptogena okutanii (strain HA), this protein is Small ribosomal subunit protein uS5.